We begin with the raw amino-acid sequence, 567 residues long: Proline--tRNA ligase (567 aa).

The protein belongs to the class-II aminoacyl-tRNA synthetase family. ProS type 1 subfamily. In terms of assembly, homodimer.

The protein resides in the cytoplasm. The catalysed reaction is tRNA(Pro) + L-proline + ATP = L-prolyl-tRNA(Pro) + AMP + diphosphate. Its function is as follows. Catalyzes the attachment of proline to tRNA(Pro) in a two-step reaction: proline is first activated by ATP to form Pro-AMP and then transferred to the acceptor end of tRNA(Pro). As ProRS can inadvertently accommodate and process non-cognate amino acids such as alanine and cysteine, to avoid such errors it has two additional distinct editing activities against alanine. One activity is designated as 'pretransfer' editing and involves the tRNA(Pro)-independent hydrolysis of activated Ala-AMP. The other activity is designated 'posttransfer' editing and involves deacylation of mischarged Ala-tRNA(Pro). The misacylated Cys-tRNA(Pro) is not edited by ProRS. The protein is Proline--tRNA ligase of Stenotrophomonas maltophilia (strain R551-3).